A 268-amino-acid polypeptide reads, in one-letter code: Shikimate dehydrogenase (NADP(+)) (268 aa).

Shikimate contacts are provided by residues S15 to S17 and T60. K64 functions as the Proton acceptor in the catalytic mechanism. Positions 85 and 101 each coordinate shikimate. NADP(+) is bound by residues G121 to S125 and L208. Residue Y210 participates in shikimate binding. NADP(+) is bound at residue G230.

Belongs to the shikimate dehydrogenase family. Homodimer.

The enzyme catalyses shikimate + NADP(+) = 3-dehydroshikimate + NADPH + H(+). Its pathway is metabolic intermediate biosynthesis; chorismate biosynthesis; chorismate from D-erythrose 4-phosphate and phosphoenolpyruvate: step 4/7. Its function is as follows. Involved in the biosynthesis of the chorismate, which leads to the biosynthesis of aromatic amino acids. Catalyzes the reversible NADPH linked reduction of 3-dehydroshikimate (DHSA) to yield shikimate (SA). In Helicobacter hepaticus (strain ATCC 51449 / 3B1), this protein is Shikimate dehydrogenase (NADP(+)).